Consider the following 789-residue polypeptide: Ribonucleoside-diphosphate reductase large subunit (789 aa).

Residues Thr207, 222 to 223 (SC), Gly253, 435 to 439 (NLCTE), and 620 to 624 (PTVSS) contribute to the substrate site. Cys223 and Cys452 are joined by a disulfide. Asn435 acts as the Proton acceptor in catalysis. The active-site Cysteine radical intermediate is the Cys437. Residue Glu439 is the Proton acceptor of the active site.

It belongs to the ribonucleoside diphosphate reductase large chain family. As to quaternary structure, heterotetramer composed of a homodimer of the large subunit (R1) and a homodimer of the small subunit (R2). Larger multisubunit protein complex are also active, composed of (R1)n(R2)n.

It catalyses the reaction a 2'-deoxyribonucleoside 5'-diphosphate + [thioredoxin]-disulfide + H2O = a ribonucleoside 5'-diphosphate + [thioredoxin]-dithiol. Ribonucleoside-diphosphate reductase holoenzyme provides the precursors necessary for viral DNA synthesis. Allows virus growth in non-dividing cells, as well as reactivation from latency in infected hosts. Catalyzes the biosynthesis of deoxyribonucleotides from the corresponding ribonucleotides. The polypeptide is Ribonucleoside-diphosphate reductase large subunit (Equus caballus (Horse)).